A 67-amino-acid polypeptide reads, in one-letter code: Putative antitoxin PF1308 (67 aa).

It belongs to the UPF0165 family.

In terms of biological role, possibly the antitoxin component of a type II toxin-antitoxin (TA) system. The protein is Putative antitoxin PF1308 of Pyrococcus furiosus (strain ATCC 43587 / DSM 3638 / JCM 8422 / Vc1).